Reading from the N-terminus, the 442-residue chain is D-serine dehydratase (442 aa).

The residue at position 118 (K118) is an N6-(pyridoxal phosphate)lysine.

This sequence belongs to the serine/threonine dehydratase family. DsdA subfamily. Monomer. It depends on pyridoxal 5'-phosphate as a cofactor.

The enzyme catalyses D-serine = pyruvate + NH4(+). This is D-serine dehydratase from Escherichia coli (strain 55989 / EAEC).